Reading from the N-terminus, the 789-residue chain is Zinc finger protein GLIS1 (789 aa).

Basic and acidic residues-rich tracts occupy residues 1 to 16 (MHCEVAEALSDKRPKE) and 63 to 74 (RAHDLLRPRSPR). Disordered regions lie at residues 1–29 (MHCEVAEALSDKRPKEAPGAPGQGRGPVS), 53–93 (LLPR…YGHS), and 278–304 (PPLPGDLGGPPKRSRPGPASSDGQEGS). Positions 80-92 (KTGSGKVNGSYGH) are enriched in polar residues. Residues 366–391 (QACRWVDCCAAYEQQEELVRHIEKSH) form a C2H2-type 1 zinc finger. The C2H2-type 2; atypical zinc-finger motif lies at 400 to 427 (FTCFWAGCVRRYKPFNARYKLLIHMRVH). C2H2-type zinc fingers lie at residues 433–457 (NKCMFEGCSKAFSRLENLKIHLRSH), 463–487 (YLCQHPGCQKAFSNSSDRAKHQRTH), and 493–517 (YACQIPGCSKRYTDPSSLRKHVKAH). Disordered regions lie at residues 506-529 (DPSSLRKHVKAHSAKEQQVRKKLH) and 573-684 (VYPG…QGYQ). Positions 511–527 (RKHVKAHSAKEQQVRKK) match the Bipartite nuclear localization signal motif. The segment covering 648–658 (ASQSQSPGGQS) has biased composition (low complexity).

The protein belongs to the GLI C2H2-type zinc-finger protein family. Interacts with KLF4. Interacts with POU5F1 and/or POU5F1B. Interacts with SOX2. As to expression, in the adult, expressed highly in placenta and kidney and at lower levels in the testis, brain, colon, brown fat tissue and thymus. During embryo development, expressed in the frontal nasal region, branchial arches, somites, vibrissal and hair follicles, limb buds, craniofacial regions, ventral part of the tail, intervertebral disks, teeth, eyes and kidney.

The protein resides in the nucleus. Functionally, acts both as a repressor and an ctivator of transcription. Binds to the consensus sequence 5'-GACCACCCAC-3'. By controlling the expression of genes involved in cell differentiation inhibits the lineage commitment of multipotent cells. Prevents, for instance, the differentiation of multipotent mesenchymal cells into adipocyte and osteoblast. The polypeptide is Zinc finger protein GLIS1 (Mus musculus (Mouse)).